The chain runs to 258 residues: MEEQGMGIRVEAMSPEYAHQATAWAERLGLPLQDDAAGFAVQVGADGLQIQQLGPQAPGPVRVDFVDGQAAHRRQFGGGNGQMIAKAVGIAQGVRPQVLDATAGLGKDAFVLASLGCQMTLIERQPLIAALLEDGLTRARSDDEVGPIVGRMRLLTGNAIERMRNWEGEAPQVIYLDPMFPHRDKSALVKKEMRVFRPLVGDDLDAPALLEAALALASHRVVVKRPRKAPIIDGPKPSHSLEGKSSRYDIYPKKALKA.

S-adenosyl-L-methionine-binding positions include 123–124 (ER) and Asp-177. The tract at residues 232 to 258 (IDGPKPSHSLEGKSSRYDIYPKKALKA) is disordered. Basic and acidic residues predominate over residues 239–252 (HSLEGKSSRYDIYP).

This sequence belongs to the methyltransferase superfamily. RsmJ family.

It is found in the cytoplasm. The catalysed reaction is guanosine(1516) in 16S rRNA + S-adenosyl-L-methionine = N(2)-methylguanosine(1516) in 16S rRNA + S-adenosyl-L-homocysteine + H(+). Functionally, specifically methylates the guanosine in position 1516 of 16S rRNA. This is Ribosomal RNA small subunit methyltransferase J from Pseudomonas putida (strain W619).